The primary structure comprises 230 residues: Large ribosomal subunit protein uL1 (230 aa).

This sequence belongs to the universal ribosomal protein uL1 family. Part of the 50S ribosomal subunit.

Functionally, binds directly to 23S rRNA. The L1 stalk is quite mobile in the ribosome, and is involved in E site tRNA release. Its function is as follows. Protein L1 is also a translational repressor protein, it controls the translation of the L11 operon by binding to its mRNA. This Bacillus cereus (strain G9842) protein is Large ribosomal subunit protein uL1.